Reading from the N-terminus, the 444-residue chain is Jacalin-related lectin 11 (444 aa).

Position 2 is an N-acetylalanine (Ala2). 3 consecutive Jacalin-type lectin domains span residues 2 to 143 (ALKV…YFIK), 146 to 290 (SIQS…YYAP), and 298 to 442 (PEKL…HVTA).

Belongs to the jacalin lectin family.

This chain is Jacalin-related lectin 11 (JAL11), found in Arabidopsis thaliana (Mouse-ear cress).